The primary structure comprises 629 residues: Flap endonuclease GEN-like 1 (629 aa).

The N-domain stretch occupies residues 1–87 (MGVGGSFWDL…DGQPSPLKSQ (87 aa)). Positions 2–98 (GVGGSFWDLL…RAARFFRGSG (97 aa)) are XPG-N domain. Residues Asp-31, Asp-78, Glu-148, Glu-150, Asp-169, Asp-171, and Asp-221 each contribute to the Mg(2+) site. Residues 136–221 (EYLGMPVLRA…VAMALLVGSD (86 aa)) form an XPG-I domain region. The interval 136 to 225 (EYLGMPVLRA…LLVGSDHDLH (90 aa)) is I-domain. The segment at 221–421 (DHDLHGVPGF…MLPMLSTIYL (201 aa)) is 5'-3' exonuclease domain. The segment at 594-617 (KKGLSGDSGKDGSRKSSDVDLSKN) is disordered. Over residues 601-614 (SGKDGSRKSSDVDL) the composition is skewed to basic and acidic residues.

It belongs to the XPG/RAD2 endonuclease family. GEN subfamily. In terms of assembly, monomer. Interacts with PCNA. PCNA stimulates the nuclease activity without altering cleavage specificity. The cofactor is Mg(2+). In terms of tissue distribution, highly expressed in anthers. Expressed in roots and leaves.

Its subcellular location is the nucleus. Its function is as follows. Endonuclease which cleaves flap structures at the junction between single-stranded DNA and double-stranded DNA. Possesses both single-stranded and double-stranded DNA-binding activities. Involved in early microspore development, but does not alter meiosis or tapetal cells development. Possesses Holliday junction (HJ) resolvase activity in vitro. Cleaves HJ at symmetrically related sites of the branch point. This chain is Flap endonuclease GEN-like 1, found in Oryza sativa subsp. japonica (Rice).